The following is a 400-amino-acid chain: Multidrug resistance protein 2 (400 aa).

Transmembrane regions (helical) follow at residues 11 to 31 (IFII…LIIP), 46 to 66 (TMGY…PFAG), 78 to 98 (IILG…GTHV), 106 to 126 (ILGG…VADI), 142 to 162 (AIST…GFGI), 164 to 184 (MPFF…VFIL), 213 to 233 (IHPV…GLSA), 253 to 273 (IAAI…LLFG), 297 to 317 (FVST…FIFL), 346 to 366 (STYT…LFDL), and 368 to 388 (IHYP…LTMV).

Belongs to the major facilitator superfamily. TCR/Tet family.

It localises to the cell membrane. Its function is as follows. Energy-dependent efflux pump responsible for decreased drug accumulation in multi-drug-resistant cells. Probably uses a transmembrane proton gradient as the energy source. Causes the efflux of a variety of toxic substances, including such structurally diverse compounds as ethidium bromide, rhodamine and acridine dyes, tetraphenylphosphonium, puromycin, chloramphenicol, doxorubicin, and fluoroquinolone antibiotics. This chain is Multidrug resistance protein 2 (blt), found in Bacillus subtilis (strain 168).